Reading from the N-terminus, the 256-residue chain is Fibroblast growth factor 3 (256 aa).

An N-terminal signal peptide occupies residues 1–18 (MVIILLLLLLSFLDPSLE). 3 disordered regions span residues 31 to 54 (APCARGQACDPRQRRDAGGRGGVY), 151 to 176 (RHHATTQPPPTGSGIGGSKRRASSKR), and 219 to 256 (LRESQRHHTGSHRAPVGRAERRRRRHRGSKGHNRRADI). Over residues 238–256 (ERRRRRHRGSKGHNRRADI) the composition is skewed to basic residues.

This sequence belongs to the heparin-binding growth factors family.

Its subcellular location is the secreted. In terms of biological role, plays an important role in the regulation of embryonic development, cell proliferation, and cell differentiation. This chain is Fibroblast growth factor 3 (fgf3), found in Danio rerio (Zebrafish).